A 444-amino-acid chain; its full sequence is sn-glycerol-3-phosphate-binding periplasmic protein UgpB (444 aa).

An N-terminal signal peptide occupies residues 1–30; the sequence is MFNNTIRKTHAIRTAAACVAFALMSAGAQA. Positions 72, 96, 151, 277, 314, 353, and 404 each coordinate sn-glycerol 3-phosphate.

Belongs to the bacterial solute-binding protein 1 family. As to quaternary structure, the complex is composed of two ATP-binding proteins (UgpC), two transmembrane proteins (UgpA and UgpE) and a solute-binding protein (UgpB).

It is found in the periplasm. Part of the ABC transporter complex UgpBAEC involved in sn-glycerol-3-phosphate (G3P) import. Binds G3P. The protein is sn-glycerol-3-phosphate-binding periplasmic protein UgpB (ugpB) of Pectobacterium atrosepticum (strain SCRI 1043 / ATCC BAA-672) (Erwinia carotovora subsp. atroseptica).